The following is a 139-amino-acid chain: MGGVKHLNEHEETLLLNELIKRGFKIYVKTRMGKKEVVSIKAEKGLVITRTSDGMEIIEAPKNFQRREFIIKPRYPEPNPVAGSSEIYKLLSTKKEIIYREEKVTRVELVNNNLILETDKGHIYILTPSSLFEYPIYTW.

This is an uncharacterized protein from Saccharolobus islandicus (Sulfolobus islandicus).